A 436-amino-acid polypeptide reads, in one-letter code: Trigger factor (436 aa).

The region spanning 163 to 248 (GDTVNIDFDG…VNEIKYKDVP (86 aa)) is the PPIase FKBP-type domain.

The protein belongs to the FKBP-type PPIase family. Tig subfamily.

It localises to the cytoplasm. The catalysed reaction is [protein]-peptidylproline (omega=180) = [protein]-peptidylproline (omega=0). In terms of biological role, involved in protein export. Acts as a chaperone by maintaining the newly synthesized protein in an open conformation. Functions as a peptidyl-prolyl cis-trans isomerase. This is Trigger factor from Staphylococcus saprophyticus subsp. saprophyticus (strain ATCC 15305 / DSM 20229 / NCIMB 8711 / NCTC 7292 / S-41).